A 184-amino-acid polypeptide reads, in one-letter code: Spiro-conjugate synthase (184 aa).

An intrachain disulfide couples Cys-57 to Cys-184. Position 115 (Gln-115) interacts with (1S,3R,6R,8R,9R,11R,14S,15S,19R,20R)-8-ethyl-9,15-dihydroxy-3,4,6,20-tetramethyl-21,23-dioxo-24-azapentacyclo[20.2.1.0(1,6).0(11,20).0(14,19)]pentacosa-4,12,22(25)-trien-25-olate.

In terms of assembly, homodimer.

The catalysed reaction is 4-[(1R,2R,4aS,5S,8aR)-2-[(2R,3R,5E,7E)-3-ethyl-2-hydroxy-5,7-dimethylnona-5,7-dien-1-yl]-5-hydroxy-1-methyl-1,2,4a,5,6,7,8,8a-octahydronaphthalene-1-carbonyl]-2-methylidene-5-oxo-2,5-dihydro-1H-pyrrol-3-olate = (1S,3R,6R,8R,9R,11R,14S,15S,19R,20R)-8-ethyl-9,15-dihydroxy-3,4,6,20-tetramethyl-21,23-dioxo-24-azapentacyclo[20.2.1.0(1,6).0(11,20).0(14,19)]pentacosa-4,12,22(25)-trien-25-olate. It functions in the pathway antibiotic biosynthesis. In terms of biological role, involved in the biosynthesis of the spirotetramate antibiotics pyrroindomycins. Catalyzes the intramolecular cyclization forming the spiro-conjugate moiety in pyrroindomycins, via an exo-selective [4+2] cycloaddition reaction. The protein is Spiro-conjugate synthase of Streptomyces rugosporus.